The sequence spans 245 residues: Balbiani ring A 28 kDa protein (245 aa).

An N-terminal signal peptide occupies residues 1 to 16; sequence MKSIIKHILFVVLLIS. Ser33, Ser40, Ser92, Ser93, and Ser115 each carry phosphoserine.

Salivary gland.

The protein resides in the secreted. Used by the larvae to construct a supramolecular structure, the larval tube. The chain is Balbiani ring A 28 kDa protein from Chironomus thummi thummi (Midge).